A 170-amino-acid chain; its full sequence is Small ribosomal subunit protein uS13 (170 aa).

Over residues 128–140 (VRHKRGQKVRGQR) the composition is skewed to basic residues. A disordered region spans residues 128-170 (VRHKRGQKVRGQRTKSTGRTEGTIGVNVEAIKEEQAEDGGDEE).

This sequence belongs to the universal ribosomal protein uS13 family. As to quaternary structure, part of the 30S ribosomal subunit. Forms a loose heterodimer with protein S19. Forms two bridges to the 50S subunit in the 70S ribosome.

Its function is as follows. Located at the top of the head of the 30S subunit, it contacts several helices of the 16S rRNA. In the 70S ribosome it contacts the 23S rRNA (bridge B1a) and protein L5 of the 50S subunit (bridge B1b), connecting the 2 subunits; these bridges are implicated in subunit movement. This chain is Small ribosomal subunit protein uS13, found in Natronomonas pharaonis (strain ATCC 35678 / DSM 2160 / CIP 103997 / JCM 8858 / NBRC 14720 / NCIMB 2260 / Gabara) (Halobacterium pharaonis).